Reading from the N-terminus, the 900-residue chain is Isoleucine--tRNA ligase (900 aa).

A 'HIGH' region motif is present at residues P58–H68. E550 is an L-isoleucyl-5'-AMP binding site. The 'KMSKS' region signature appears at K591–S595. K594 serves as a coordination point for ATP. Zn(2+)-binding residues include C871, C874, C888, and C891.

It belongs to the class-I aminoacyl-tRNA synthetase family. IleS type 1 subfamily. Monomer. Requires Zn(2+) as cofactor.

The protein localises to the cytoplasm. The catalysed reaction is tRNA(Ile) + L-isoleucine + ATP = L-isoleucyl-tRNA(Ile) + AMP + diphosphate. Catalyzes the attachment of isoleucine to tRNA(Ile). As IleRS can inadvertently accommodate and process structurally similar amino acids such as valine, to avoid such errors it has two additional distinct tRNA(Ile)-dependent editing activities. One activity is designated as 'pretransfer' editing and involves the hydrolysis of activated Val-AMP. The other activity is designated 'posttransfer' editing and involves deacylation of mischarged Val-tRNA(Ile). The protein is Isoleucine--tRNA ligase of Malacoplasma penetrans (strain HF-2) (Mycoplasma penetrans).